The following is a 251-amino-acid chain: Lactose phosphotransferase system repressor (251 aa).

The HTH deoR-type domain occupies 3-58 (KHERLDEIAKLVNKKGTIRTNEIVEGLNVSDMTVRRDLIELENKGILTKIHGGARS). Residues 20 to 39 (IRTNEIVEGLNVSDMTVRRD) constitute a DNA-binding region (H-T-H motif).

In terms of biological role, repressor of the lactose catabolism operon. Galactose-6-phosphate is the inducer. The chain is Lactose phosphotransferase system repressor (lacR) from Staphylococcus aureus (strain NCTC 8325 / PS 47).